Consider the following 757-residue polypeptide: MDVNPTLLFLKVPAQNAISTTFPYTGDPPYSHGTGTGYTMDTVNRTHQYSERGRWTKNTETGAPQLNPIDGPLPKDNEPSGYAQTDCVLEAMAFLEESHPGIFENSCIETMEVVQQTRVDKLTQGRQTYDWTLNRNQPAATALANTIEVFRSNGLMANESGRLIDFLKDVMESMDREEVEITTHFQRKRRVRDNVTKKMVTQRTIGKKKQRLNKRSYLIRALTLNTMTKDAERGKLKRRAIATPGMQIRGFVYFVETLARSICEKLEQSGLPVGGNEKKAKLANVVRKMMTNSQDTEISFTITGDNTKWNENQNPRMFLAMITYITRNQPEWFRNILSIAPIMFSNKMARLGKGYMFESKSMKLRTQIPAEMLANIDLKYFNDSTRKKIEKIRPLLIDGTASLSPGMMMGMFNMLSTVLGVSILNLGQKRYTKTTYWWDGLQSSDDFALIVNAPNHAGIQAGVDRFYRTCKLLGINMSKKKSYINRTGTFEFTSFFYRYGFVANFSMELPSFGVSGINESADMSIGVTVIKNNMINNDLGPATAQMALQLFIKDYRYTYRCHRGDTQIQTRRSFEIKKLWEQTRSKAGLLVSDGGPNLYNIRNLHIPEVCLKWELMDEDYQGRLCNPLNPFVSHKEIESVNNAVMMPAHGPAKNMEYDAVATTHSWVPKRNRSILNTSQRGILEDEQMYQRCCNLFEKFFPSSSYRRPVGISSMVEAMVSRARIDARIDFESGRIKKEEFTEIMKTCSTIEELRRQK.

Residues 53 to 82 are disordered; that stretch reads GRWTKNTETGAPQLNPIDGPLPKDNEPSGY. 2 short sequence motifs (nuclear localization signal) span residues 187 to 195 and 203 to 216; these read RKRRVRDNV and RTIG…NKRS. Residues 249–256 are promoter-binding site; it reads RGFVYFVE. Residues 286–483 form the RdRp catalytic domain; sequence VRKMMTNSQD…GINMSKKKSY (198 aa).

Belongs to the influenza viruses polymerase PB1 family. As to quaternary structure, influenza RNA polymerase is composed of three subunits: PB1, PB2 and PA. Interacts (via N-terminus) with PA (via C-terminus). Interacts (via C-terminus) with PB2 (via N-terminus); this interaction is essential for transcription initiation. Interacts (via C-terminus) with human PKP2 (via N-terminus); the interaction competitively inhibits the interaction between the RNA polymerase subunits PB1 and PB2. Post-translationally, phosphorylated by host PRKCA.

The protein localises to the host nucleus. It is found in the host cytoplasm. The enzyme catalyses RNA(n) + a ribonucleoside 5'-triphosphate = RNA(n+1) + diphosphate. Its function is as follows. RNA-dependent RNA polymerase which is responsible for replication and transcription of virus RNA segments. The transcription of viral mRNAs occurs by a unique mechanism called cap-snatching. 5' methylated caps of cellular mRNAs are cleaved after 10-13 nucleotides by PA. In turn, these short capped RNAs are used as primers by PB1 for transcription of viral mRNAs. During virus replication, PB1 initiates RNA synthesis and copy vRNA into complementary RNA (cRNA) which in turn serves as a template for the production of more vRNAs. This is RNA-directed RNA polymerase catalytic subunit from Aves (Human).